The primary structure comprises 368 residues: 3-dehydroquinate synthase (368 aa).

NAD(+) is bound by residues 110 to 114, 134 to 135, Lys-147, and Lys-156; these read GVIGD and TS. 3 residues coordinate Zn(2+): Glu-189, His-254, and His-271.

The protein belongs to the sugar phosphate cyclases superfamily. Dehydroquinate synthase family. It depends on NAD(+) as a cofactor. Requires Co(2+) as cofactor. Zn(2+) serves as cofactor.

The protein localises to the cytoplasm. It catalyses the reaction 7-phospho-2-dehydro-3-deoxy-D-arabino-heptonate = 3-dehydroquinate + phosphate. The protein operates within metabolic intermediate biosynthesis; chorismate biosynthesis; chorismate from D-erythrose 4-phosphate and phosphoenolpyruvate: step 2/7. Functionally, catalyzes the conversion of 3-deoxy-D-arabino-heptulosonate 7-phosphate (DAHP) to dehydroquinate (DHQ). The chain is 3-dehydroquinate synthase from Thermosynechococcus vestitus (strain NIES-2133 / IAM M-273 / BP-1).